Here is a 714-residue protein sequence, read N- to C-terminus: G protein-coupled receptor kinase 2 (714 aa).

The N-terminal stretch occupies residues 1-308; sequence MELENIVANT…LEAQPITYKT (308 aa). 2 RGS domains span residues 53–174 and 177–294; these read YGYV…SQHS and INHK…HRYL. Residues 141–229 form a disordered region; the sequence is SNANPTETAE…GGGEGGGGGK (89 aa). Low complexity predominate over residues 154 to 175; it reads CNNTTANNCNNINNSNNSQHSS. Basic and acidic residues-rich tracts occupy residues 176–190 and 199–220; these read DINH…HNGD and HQDD…EKGG. Positions 309–574 constitute a Protein kinase domain; sequence FRMYRVLGKG…GQDVMAHPFF (266 aa). ATP contacts are provided by residues 315 to 323 and Lys338; that span reads LGKGGFGEV. Residue Asp435 is the Proton acceptor of the active site. Residues 577 to 642 enclose the AGC-kinase C-terminal domain; that stretch reads TQLNWRRLEA…GSVSISWQNE (66 aa). Ser612 carries the phosphoserine modification. Thr613 bears the Phosphothreonine mark. The disordered stretch occupies residues 667 to 714; the sequence is INAAPEPDKAGCFPFRRKKKQPARTQPIPIPEHLLTTSHSVSSTTVES. The segment covering 698-714 has biased composition (low complexity); sequence EHLLTTSHSVSSTTVES.

Belongs to the protein kinase superfamily. AGC Ser/Thr protein kinase family. GPRK subfamily. Expressed in all larval tissues and in adult ovaries. Larval CNS staining is localized to axons projecting to the optic lobes and the mushroom bodies, in the longitudinal connectives, and in cell bodies and nerves of the ring gland corpus allatum. Adult CNS staining is detectable only in cell bodies and processes associated with the ellipsoid body of the central complex and portions of the mushroom bodies. In the wing disk, expression is confined to a stripe that parallels the anterior/posterior boundary of the wing blade and the hinge region, and weak expression in the prospective notum.

The protein localises to the membrane. The catalysed reaction is [G-protein-coupled receptor] + ATP = [G-protein-coupled receptor]-phosphate + ADP + H(+). In terms of biological role, specifically phosphorylates the activated forms of G protein-coupled receptors. Required during oogenesis and embryogenesis; component of a signaling pathway that functions during egg chamber maturation. The chain is G protein-coupled receptor kinase 2 (Gprk2) from Drosophila melanogaster (Fruit fly).